Consider the following 641-residue polypeptide: Single-strand DNA endonuclease 1 (641 aa).

Residues 1 to 90 (MGVKNLWDIL…SLKLATYRRR (90 aa)) form an N-domain region. The interval 2 to 97 (GVKNLWDILE…RRRLGSISHA (96 aa)) is XPG-N domain. Mg(2+)-binding residues include aspartate 30, aspartate 76, glutamate 144, glutamate 146, aspartate 165, aspartate 167, and aspartate 217. The segment at 132-217 (MALGIPCLDG…ISLAVLLGSD (86 aa)) is XPG-I domain. I-domain stretches follow at residues 132-220 (MALG…DYSN) and 132-221 (MALG…YSNG). A 5'-3' exonuclease domain region spans residues 217 to 350 (DYSNGVNGFG…ILPKIAEREL (134 aa)). Disordered regions lie at residues 428–448 (KGEE…QAAV) and 572–615 (VGSH…RVHH). The segment covering 580–590 (DGGGGGGGGVA) has biased composition (gly residues).

This sequence belongs to the XPG/RAD2 endonuclease family. GEN subfamily. Requires Mg(2+) as cofactor. In terms of tissue distribution, highly expressed in shoot apical meristem (SAM) and young leaves. Expressed in roots, flag leaf and panicles.

The protein localises to the nucleus. In terms of biological role, single-stranded DNA endonuclease activity in vitro. May not be active as double-stranded DNA endonuclease. Endonuclease which cleaves flap structures at the junction between single-stranded DNA and double-stranded DNA with a specific cleavage site in the 5' overhang strand exactly one nucleotide 3' of the branch point. Structure- and sequence-specific nuclease that resolves holliday junctions (HJs) by symmetrically oriented incisions in two opposing strands near the junction point, thus leading to ligatable products; HJs are physical links between homologous DNA molecules that arise as central intermediary structures during homologous recombination and repair in meiotic and somatic cells. Probably involved in the resolution of toxic replication structures to ensure genome stability, and to maintain telomere integrity and replication. This is Single-strand DNA endonuclease 1 from Oryza sativa subsp. japonica (Rice).